The primary structure comprises 876 residues: Protein TORMOZ EMBRYO DEFECTIVE (876 aa).

WD repeat units lie at residues 58–97, 100–139, 142–183, 190–229, 255–294, 308–347, 356–396, 399–441, 444–484, 497–536, 539–580, 581–620, and 623–662; these read GESDTLTALALSPDDKLLFSAGHSRQIRVWDLETLKCIRS, GHEGPVMGMACHASGGLLATAGADRKVLVWDVDGGFCTHY, GHKG…TEKK, KHFSAVTSIALSEDGLTLFSAGRDKVVNLWDLHDYSCKAT, LDQKKSKKKESDSQATYFITVGERGVVRIWKSEGSICLYE, ESKRGFTAAAMLPSDHGLLCVTADQQFFFYSVVENVEETE, GYNE…CSYV, GHKE…CIGV, GHNG…EDSE, AHDKDINSVAVARNDSLVCTGSEDRTASIWRLPDLVHVVT, GHKR…KTFE, GHTSSVLRASFITDGTQFVSCGADGLLKLWNVNTSECIAT, and QHEDKVWALAVGKKTEMIATGGGDAVINLWHDSTASDKED. The segment at 816-876 is disordered; that stretch reads VETEYPKDEK…AEAQGSVIAV (61 aa). Residues 819-831 are compositionally biased toward basic and acidic residues; the sequence is EYPKDEKKKEKDV. The Nuclear localization signal signature appears at 848–855; that stretch reads SRKRKSQK. The span at 849-864 shows a compositional bias: basic residues; sequence RKRKSQKSKGKSNKKR.

In terms of tissue distribution, preferentially expressed in dividing cells in a variety of tissues and meristematic regions.

It is found in the nucleus. It localises to the nucleolus. Functionally, essential protein involved in the regulation of cell division planes during embryogenesis which defines cell patterning, especially longitudinal division planes of the proembryo, probably via the regulation of embryo patterning genes expression patterns. This Arabidopsis thaliana (Mouse-ear cress) protein is Protein TORMOZ EMBRYO DEFECTIVE.